A 590-amino-acid chain; its full sequence is Myo-inositol transporter 3 (590 aa).

Basic and acidic residues predominate over residues 1 to 26; it reads MRTTHIEDRDNNSLENKHTDHIEGVE. Residues 1–40 form a disordered region; it reads MRTTHIEDRDNNSLENKHTDHIEGVENGKGTQEPPSPSGF. Over 1 to 57 the chain is Cytoplasmic; sequence MRTTHIEDRDNNSLENKHTDHIEGVENGKGTQEPPSPSGFGGHLIDENLVHVEGEDK. A helical membrane pass occupies residues 58-78; that stretch reads VTWYLCFLISASAIAGFLFGY. Over 79–105 the chain is Extracellular; it reads DTGVVGVALPLVGTDLGGNELNSSQQE. A glycan (N-linked (GlcNAc...) asparagine) is linked at Asn-100. A helical membrane pass occupies residues 106–126; sequence IITAGTTIGAIFGSAILGGWG. Over 127–132 the chain is Cytoplasmic; sequence DHLGRK. Residues 133 to 153 traverse the membrane as a helical segment; the sequence is MAILISDVFFTVGAVIIASSY. Over 154 to 157 the chain is Extracellular; that stretch reads SVPQ. A helical transmembrane segment spans residues 158 to 178; the sequence is IIVGRIVLGVGVGGAAVIAPL. At 179-192 the chain is on the cytoplasmic side; sequence FITETAPTAVRGRC. Residues 193–213 traverse the membrane as a helical segment; it reads IGVNAFFIPFGQLVADSIGAG. Over 214-222 the chain is Extracellular; sequence VQNMHGGWR. A helical transmembrane segment spans residues 223–243; sequence LLFALGAVPSLIQLLLFHYLP. Residues 244–325 are Cytoplasmic-facing; that stretch reads ESPRILIVKG…AVSVLQAAGQ (82 aa). The chain crosses the membrane as a helical span at residues 326–346; that stretch reads LCGFNTLLYYAGTLFGLLGLS. Over 347-349 the chain is Extracellular; it reads NPA. A helical transmembrane segment spans residues 350-370; that stretch reads LGGLIPAGTNAVFVLIGMSTV. The Cytoplasmic segment spans residues 371 to 376; it reads DKIGRR. The helical transmembrane segment at 377–397 threads the bilayer; sequence GLLLVGVPVLLLGLVWNIIGF. Residues 398 to 420 are Extracellular-facing; that stretch reads YYMCKPTGGFLDTSYSYDTTNVG. Residues 421–441 traverse the membrane as a helical segment; the sequence is IVIGGIVFYVAGFGLTYSHLV. Residues 442–455 lie on the Cytoplasmic side of the membrane; it reads WYQAEYLALEVRSM. A helical membrane pass occupies residues 456–476; the sequence is GSGVATTVCWIANLVVSVSYL. Residues 477–485 lie on the Extracellular side of the membrane; that stretch reads SELETMTPS. The chain crosses the membrane as a helical span at residues 486 to 506; it reads GTYGFYLGLSVIAFVFVVFCF. At 507–590 the chain is on the cytoplasmic side; the sequence is PETKQLSIDE…GGKRKPQVLV (84 aa).

Belongs to the major facilitator superfamily. Sugar transporter (TC 2.A.1.1) family.

Its subcellular location is the cell membrane. The catalysed reaction is myo-inositol(out) + H(+)(out) = myo-inositol(in) + H(+)(in). In terms of biological role, transporter for myo-inositol. This Cryptococcus neoformans var. grubii serotype A (strain H99 / ATCC 208821 / CBS 10515 / FGSC 9487) (Filobasidiella neoformans var. grubii) protein is Myo-inositol transporter 3.